A 101-amino-acid chain; its full sequence is Small ribosomal subunit protein bS18c (101 aa).

The span at 1–19 shows a compositional bias: basic residues; the sequence is MDKSKRPFRKSKRSFRKRL. Residues 1 to 23 are disordered; that stretch reads MDKSKRPFRKSKRSFRKRLPPIG.

It belongs to the bacterial ribosomal protein bS18 family. As to quaternary structure, part of the 30S ribosomal subunit.

Its subcellular location is the plastid. It localises to the chloroplast. This Chloranthus spicatus (Chulantree) protein is Small ribosomal subunit protein bS18c.